The primary structure comprises 360 residues: Putative agmatine deiminase (360 aa).

Cys-353 functions as the Amidino-cysteine intermediate in the catalytic mechanism.

The protein belongs to the agmatine deiminase family.

It carries out the reaction agmatine + H2O = N-carbamoylputrescine + NH4(+). This chain is Putative agmatine deiminase, found in Vibrio parahaemolyticus serotype O3:K6 (strain RIMD 2210633).